A 661-amino-acid polypeptide reads, in one-letter code: Acetyl-coenzyme A synthetase (661 aa).

CoA contacts are provided by residues 197–200 and threonine 320; that span reads RGGK. ATP-binding positions include 396-398, 420-425, aspartate 511, and arginine 526; these read GEP and DTWWQT. Serine 534 is a CoA binding site. Arginine 537 contributes to the ATP binding site. Residues valine 548 and valine 553 each contribute to the Mg(2+) site. N6-acetyllysine is present on lysine 620.

Belongs to the ATP-dependent AMP-binding enzyme family. Mg(2+) is required as a cofactor. Post-translationally, acetylated. Deacetylation by the SIR2-homolog deacetylase activates the enzyme.

It catalyses the reaction acetate + ATP + CoA = acetyl-CoA + AMP + diphosphate. Functionally, catalyzes the conversion of acetate into acetyl-CoA (AcCoA), an essential intermediate at the junction of anabolic and catabolic pathways. AcsA undergoes a two-step reaction. In the first half reaction, AcsA combines acetate with ATP to form acetyl-adenylate (AcAMP) intermediate. In the second half reaction, it can then transfer the acetyl group from AcAMP to the sulfhydryl group of CoA, forming the product AcCoA. The sequence is that of Acetyl-coenzyme A synthetase from Leptospira interrogans serogroup Icterohaemorrhagiae serovar copenhageni (strain Fiocruz L1-130).